Here is a 331-residue protein sequence, read N- to C-terminus: Ferrochelatase (331 aa).

Fe cation-binding residues include H187 and E286.

The protein belongs to the ferrochelatase family.

The protein resides in the cytoplasm. The catalysed reaction is heme b + 2 H(+) = protoporphyrin IX + Fe(2+). The protein operates within porphyrin-containing compound metabolism; protoheme biosynthesis; protoheme from protoporphyrin-IX: step 1/1. Catalyzes the ferrous insertion into protoporphyrin IX. This chain is Ferrochelatase, found in Legionella pneumophila subsp. pneumophila (strain Philadelphia 1 / ATCC 33152 / DSM 7513).